A 172-amino-acid chain; its full sequence is MKIYKDIITGDEMFSDTYKMKLVDEVIYEVTGRLVTRAQGDIQIEGFNPSAEEADEGTDSAVESGVDIVLNHRLVETYAFGDKKSYTLYLKDYMKKLVAKLEEKAPDQVEVFKTNMNKVMKDILGRFKELQFFTGESMDCDGMVAMMEYRDFDGTQIPIMMFFKHGLEEEKF.

The TCTP domain occupies 1 to 172; the sequence is MKIYKDIITG…FKHGLEEEKF (172 aa).

It belongs to the TCTP family.

Its subcellular location is the cytoplasm. Its function is as follows. Involved in calcium binding and microtubule stabilization. In Bombyx mori (Silk moth), this protein is Translationally-controlled tumor protein homolog (Tctp).